The chain runs to 73 residues: Translation initiation factor IF-1 1 (73 aa).

The region spanning 1–72 (MAKEELIEFG…TKGRINFRHK (72 aa)) is the S1-like domain.

Belongs to the IF-1 family. Component of the 30S ribosomal translation pre-initiation complex which assembles on the 30S ribosome in the order IF-2 and IF-3, IF-1 and N-formylmethionyl-tRNA(fMet); mRNA recruitment can occur at any time during PIC assembly.

It localises to the cytoplasm. Functionally, one of the essential components for the initiation of protein synthesis. Stabilizes the binding of IF-2 and IF-3 on the 30S subunit to which N-formylmethionyl-tRNA(fMet) subsequently binds. Helps modulate mRNA selection, yielding the 30S pre-initiation complex (PIC). Upon addition of the 50S ribosomal subunit IF-1, IF-2 and IF-3 are released leaving the mature 70S translation initiation complex. In Cupriavidus metallidurans (strain ATCC 43123 / DSM 2839 / NBRC 102507 / CH34) (Ralstonia metallidurans), this protein is Translation initiation factor IF-1 1.